Here is a 129-residue protein sequence, read N- to C-terminus: Basic blue protein (129 aa).

Positions 1–33 are cleaved as a signal peptide; that stretch reads MAKGRGSASWSARAIVTLMAVSVLLLQADYVQA. A Phytocyanin domain is found at 34–129; the sequence is ATYTVGDSGI…SDMKIAVTAV (96 aa). Histidine 72, cysteine 112, histidine 117, and methionine 122 together coordinate Cu cation. Cysteine 85 and cysteine 118 form a disulfide bridge.

As to expression, expressed in the inflorescence and in the transmitting tract of the pistil. Detected in roots, stems, cauline leaves, cotyledons, hypocotyls, guard cells, pistils, sepals, stamen filaments and vascular bundles of roots but not of leaves. Not expressed in petals, anthers or pollen.

The protein localises to the secreted. Its subcellular location is the extracellular space. It is found in the extracellular matrix. Its function is as follows. Forms a concentration gradient along the pollen tube growth path, with a lower level in the stigma papilla cell wall and a higher level in the transmitting tract extracellular matix of the style. This chain is Basic blue protein (ARPN), found in Arabidopsis thaliana (Mouse-ear cress).